Reading from the N-terminus, the 381-residue chain is Queuine tRNA-ribosyltransferase (381 aa).

Asp-89 functions as the Proton acceptor in the catalytic mechanism. Substrate contacts are provided by residues 89–93 (DSGGF), Asp-143, Gln-187, and Gly-214. The RNA binding stretch occupies residues 245 to 251 (GVGKPED). The Nucleophile role is filled by Asp-264. Positions 269–273 (TRNAR) are RNA binding; important for wobble base 34 recognition. Positions 302, 304, 307, and 333 each coordinate Zn(2+).

This sequence belongs to the queuine tRNA-ribosyltransferase family. As to quaternary structure, homodimer. Within each dimer, one monomer is responsible for RNA recognition and catalysis, while the other monomer binds to the replacement base PreQ1. Zn(2+) is required as a cofactor.

It catalyses the reaction 7-aminomethyl-7-carbaguanine + guanosine(34) in tRNA = 7-aminomethyl-7-carbaguanosine(34) in tRNA + guanine. It participates in tRNA modification; tRNA-queuosine biosynthesis. In terms of biological role, catalyzes the base-exchange of a guanine (G) residue with the queuine precursor 7-aminomethyl-7-deazaguanine (PreQ1) at position 34 (anticodon wobble position) in tRNAs with GU(N) anticodons (tRNA-Asp, -Asn, -His and -Tyr). Catalysis occurs through a double-displacement mechanism. The nucleophile active site attacks the C1' of nucleotide 34 to detach the guanine base from the RNA, forming a covalent enzyme-RNA intermediate. The proton acceptor active site deprotonates the incoming PreQ1, allowing a nucleophilic attack on the C1' of the ribose to form the product. After dissociation, two additional enzymatic reactions on the tRNA convert PreQ1 to queuine (Q), resulting in the hypermodified nucleoside queuosine (7-(((4,5-cis-dihydroxy-2-cyclopenten-1-yl)amino)methyl)-7-deazaguanosine). The polypeptide is Queuine tRNA-ribosyltransferase (Pectobacterium atrosepticum (strain SCRI 1043 / ATCC BAA-672) (Erwinia carotovora subsp. atroseptica)).